We begin with the raw amino-acid sequence, 87 residues long: Large ribosomal subunit protein bL27 (87 aa).

Residues 1 to 24 form a disordered region; it reads MAHKKGTGSTRNGRDSRSQRLGVK.

It belongs to the bacterial ribosomal protein bL27 family.

This is Large ribosomal subunit protein bL27 from Crocosphaera subtropica (strain ATCC 51142 / BH68) (Cyanothece sp. (strain ATCC 51142)).